We begin with the raw amino-acid sequence, 386 residues long: Enamidase (386 aa).

3 residues coordinate Zn(2+): His-67, His-69, and Glu-164. 3 residues coordinate Fe cation: Glu-164, His-193, and His-220. Asp-276 provides a ligand contact to Zn(2+).

In terms of assembly, homotetramer. Dimer of dimers. The cofactor is Fe cation. Requires Zn(2+) as cofactor.

It catalyses the reaction 1,4,5,6-tetrahydro-6-oxonicotinate + 2 H2O = 2-formylglutarate + NH4(+). It functions in the pathway cofactor degradation; nicotinate degradation; propanoate and pyruvate from 6-hydroxynicotinate: step 2/8. Functionally, decyclization of 6-oxo-1,4,5,6-tetrahydronicotinate to form 2-(enamine)glutarate, followed by hydrolysis to form (S)-2-formylglutarate. This chain is Enamidase, found in Eubacterium barkeri (Clostridium barkeri).